The chain runs to 251 residues: Triosephosphate isomerase (251 aa).

9-11 contacts substrate; that stretch reads NWK. Residue His-95 is the Electrophile of the active site. Glu-167 acts as the Proton acceptor in catalysis. Residues Gly-173, Ser-213, and 234–235 contribute to the substrate site; that span reads GG.

This sequence belongs to the triosephosphate isomerase family. In terms of assembly, homodimer.

It is found in the cytoplasm. It catalyses the reaction D-glyceraldehyde 3-phosphate = dihydroxyacetone phosphate. Its pathway is carbohydrate biosynthesis; gluconeogenesis. It participates in carbohydrate degradation; glycolysis; D-glyceraldehyde 3-phosphate from glycerone phosphate: step 1/1. In terms of biological role, involved in the gluconeogenesis. Catalyzes stereospecifically the conversion of dihydroxyacetone phosphate (DHAP) to D-glyceraldehyde-3-phosphate (G3P). This chain is Triosephosphate isomerase, found in Lacticaseibacillus casei (strain BL23) (Lactobacillus casei).